The following is a 212-amino-acid chain: Protein-L-isoaspartate O-methyltransferase (212 aa).

Ser61 is an active-site residue.

This sequence belongs to the methyltransferase superfamily. L-isoaspartyl/D-aspartyl protein methyltransferase family.

It localises to the cytoplasm. The enzyme catalyses [protein]-L-isoaspartate + S-adenosyl-L-methionine = [protein]-L-isoaspartate alpha-methyl ester + S-adenosyl-L-homocysteine. Its function is as follows. Catalyzes the methyl esterification of L-isoaspartyl residues in peptides and proteins that result from spontaneous decomposition of normal L-aspartyl and L-asparaginyl residues. It plays a role in the repair and/or degradation of damaged proteins. In Pseudoalteromonas atlantica (strain T6c / ATCC BAA-1087), this protein is Protein-L-isoaspartate O-methyltransferase.